A 379-amino-acid polypeptide reads, in one-letter code: UDP-4-amino-4-deoxy-L-arabinose--oxoglutarate aminotransferase (379 aa).

N6-(pyridoxal phosphate)lysine is present on Lys-182.

The protein belongs to the DegT/DnrJ/EryC1 family. ArnB subfamily. As to quaternary structure, homodimer. Requires pyridoxal 5'-phosphate as cofactor.

It carries out the reaction UDP-4-amino-4-deoxy-beta-L-arabinose + 2-oxoglutarate = UDP-beta-L-threo-pentopyranos-4-ulose + L-glutamate. It functions in the pathway nucleotide-sugar biosynthesis; UDP-4-deoxy-4-formamido-beta-L-arabinose biosynthesis; UDP-4-deoxy-4-formamido-beta-L-arabinose from UDP-alpha-D-glucuronate: step 2/3. The protein operates within bacterial outer membrane biogenesis; lipopolysaccharide biosynthesis. In terms of biological role, catalyzes the conversion of UDP-4-keto-arabinose (UDP-Ara4O) to UDP-4-amino-4-deoxy-L-arabinose (UDP-L-Ara4N). The modified arabinose is attached to lipid A and is required for resistance to polymyxin and cationic antimicrobial peptides. In Klebsiella pneumoniae (strain 342), this protein is UDP-4-amino-4-deoxy-L-arabinose--oxoglutarate aminotransferase.